Here is a 70-residue protein sequence, read N- to C-terminus: NADH dehydrogenase [ubiquinone] 1 alpha subcomplex subunit 1 (70 aa).

The chain crosses the membrane as a helical span at residues 1 to 21 (MWFEILPGLAIMGVCLVIPGV).

Belongs to the complex I NDUFA1 subunit family. In terms of assembly, complex I is composed of 45 different subunits.

The protein localises to the mitochondrion inner membrane. Its function is as follows. Accessory subunit of the mitochondrial membrane respiratory chain NADH dehydrogenase (Complex I), that is believed not to be involved in catalysis. Complex I functions in the transfer of electrons from NADH to the respiratory chain. The immediate electron acceptor for the enzyme is believed to be ubiquinone. This Mus musculus (Mouse) protein is NADH dehydrogenase [ubiquinone] 1 alpha subcomplex subunit 1 (Ndufa1).